Consider the following 215-residue polypeptide: Cytochrome b6 (215 aa).

Residues 32–52 form a helical membrane-spanning segment; it reads IFYCLGGITFTSFVIQVASGF. Cys-35 is a binding site for heme c. 2 residues coordinate heme b: His-86 and His-100. Helical transmembrane passes span 90–110, 116–136, and 186–206; these read ASMMVLMMILHIFRVYLTGGF, LTWVTGVILSVLTVSFGVTGY, and LHTFVLPLLTAVFMLMHFLMI. Heme b is bound by residues His-187 and His-202.

The protein belongs to the cytochrome b family. PetB subfamily. The 4 large subunits of the cytochrome b6-f complex are cytochrome b6, subunit IV (17 kDa polypeptide, PetD), cytochrome f and the Rieske protein, while the 4 small subunits are PetG, PetL, PetM and PetN. The complex functions as a dimer. Heme b is required as a cofactor. Requires heme c as cofactor.

The protein localises to the plastid. It localises to the chloroplast thylakoid membrane. Component of the cytochrome b6-f complex, which mediates electron transfer between photosystem II (PSII) and photosystem I (PSI), cyclic electron flow around PSI, and state transitions. This Chaetosphaeridium globosum (Charophycean green alga) protein is Cytochrome b6.